We begin with the raw amino-acid sequence, 1304 residues long: Splicing factor 3B subunit 1 (1304 aa).

Disordered stretches follow at residues 100–119 (QYDPFAEHRPPKIADREDEY) and 124–148 (RTMIISPERLDPFADGGKTPDPKMN). Residues 104–119 (FAEHRPPKIADREDEY) are compositionally biased toward basic and acidic residues. Thr125 carries the post-translational modification Phosphothreonine. Position 129 is a phosphoserine (Ser129). Residue Lys141 is modified to N6-acetyllysine. Thr142 is subject to Phosphothreonine. Arg157 carries the citrulline modification. The tract at residues 173–360 (AEKAKAGELK…PVLTPGKTPI (188 aa)) is disordered. Residues 190–342 (SQPPSKRKRR…KRKSRWDETP (153 aa)) form a U2AF homology region; mediates interaction with RBM39 region. Position 194 is a phosphoserine (Ser194). Phosphothreonine is present on residues Thr203, Thr207, and Thr211. Lys214 carries the post-translational modification N6-acetyllysine; alternate. Residue Lys214 forms a Glycyl lysine isopeptide (Lys-Gly) (interchain with G-Cter in SUMO2); alternate linkage. Phosphothreonine is present on residues Thr223 and Thr227. An interaction with PPP1R8 region spans residues 223-491 (TPGHTPSLRW…VDESTLSPEE (269 aa)). Residue Ser229 is modified to Phosphoserine. The segment covering 231-241 (RWDETPGRAKG) has biased composition (basic and acidic residues). Residues Thr235, Thr244, Thr248, Thr257, Thr261, Thr267, Thr273, and Thr278 each carry the phosphothreonine modification. Residue Ser287 is modified to Phosphoserine. Basic and acidic residues predominate over residues 291-304 (NRWDETPKTERDTP). Phosphothreonine is present on residues Thr296, Thr299, Thr303, and Thr313. Ser322 bears the Phosphoserine mark. Phosphothreonine is present on residues Thr326 and Thr328. Ser332 carries the post-translational modification Phosphoserine. Thr341 is subject to Phosphothreonine. Polar residues predominate over residues 342–352 (PASQMGGSTPV). Residues Ser344 and Ser349 each carry the phosphoserine modification. 2 positions are modified to phosphothreonine: Thr350 and Thr354. Ser400 carries the phosphoserine modification. Lys413 participates in a covalent cross-link: Glycyl lysine isopeptide (Lys-Gly) (interchain with G-Cter in SUMO2); alternate. Lys413 participates in a covalent cross-link: Glycyl lysine isopeptide (Lys-Gly) (interchain with G-Cter in SUMO1); alternate. Thr426 bears the Phosphothreonine mark. Residue Lys430 forms a Glycyl lysine isopeptide (Lys-Gly) (interchain with G-Cter in SUMO2) linkage. Position 434 is a phosphothreonine; by DYRK1A (Thr434). Thr436 carries the post-translational modification Phosphothreonine. Position 488 is a phosphoserine (Ser488). HEAT repeat units follow at residues 529–568 (GPLFNQILPLLMSPTLEDQERHLLVKVIDRILYKLDDLVR), 569–603 (PYVHKILVVIEPLLIDEDYYARVEGREIISNLAKA), 604–641 (AGLATMISTMRPDIDNMDEYVRNTTARAFAVVASALGI), 643–677 (SLLPFLKAVCKSKKSWQARHTGIKIVQQIAILMGC), 680–718 (LPHLRSLVEIIEHGLVDEQQKVRTISALAIAALAEAATP), 763–801 (NYYTREVMLILIREFQSPDEEMKKIVLKVVKQCCGTDGV), 843–881 (KVGAAEIISRIVDDLKDEAEQYRKMVMETIEKIMGNLGA), 1010–1048 (TPPIKDLLPRLTPILKNRHEKVQENCIDLVGRIADRGAE), 1052–1090 (AREWMRICFELLELLKAHKKAIRRATVNTFGYIAKAIGP), 1122–1160 (TCSPFTVLPALMNEYRVPELNVQNGVLKSLSFLFEYIGE), and 1163–1201 (KDYIYAVTPLLEDALMDRDLVHRQTASAVVQHMSLGVYG). The segment at 529–568 (GPLFNQILPLLMSPTLEDQERHLLVKVIDRILYKLDDLVR) is interaction with SF3B14. The segment at 547–550 (QERH) is interaction with PHF5A. 2 positions are modified to N6-acetyllysine: Lys554 and Lys562. The tract at residues 1156-1157 (EY) is interaction with PHF5A. An interaction with SF3B3 and SF3B5 region spans residues 1248 to 1304 (QYCLQGLFHPARKVRDVYWKIYNSIYIGSQDALIAHYPRIYNDDKNTYIRYELDYIL).

It belongs to the SF3B1 family. Component of the 17S U2 SnRNP complex, a ribonucleoprotein complex that contains small nuclear RNA (snRNA) U2 and a number of specific proteins. Part of the SF3B subcomplex of the 17S U2 SnRNP complex. SF3B associates with the splicing subcomplex SF3A and a 12S RNA unit to form the U2 small nuclear ribonucleoproteins complex (U2 snRNP). Within the SF3B complex, interacts directly (via HEAT domain) with SF3B3, SF3B5, SF3B6 and (via HEAT domain) with PHF5A. The SF3B subcomplex interacts with U2AF2. Identified in the spliceosome C complex. Component of the minor (U12-type spliceosome) spliceosome. Within the minor spliceosome complex, interacts with SCNM1 and CRIPT. Component of the B-WICH complex, at least composed of SMARCA5/SNF2H, BAZ1B/WSTF, SF3B1, DEK, MYO1C, ERCC6, MYBBP1A and DDX21. Phosphorylated form interacts with PPP1R8. Interacts with PQBP1. Interacts with RBM17. Interacts with RBM39. Interacts with SETX. Interacts with RBM15. Interacts with USH1G. Interacts with SDE2. Interacts with U2AF1. Interacts with CACTIN. Interacts with ZRSR1. Interacts with CYREN. Phosphorylated. Phosphorylation occurs concomitantly with the splicing catalytic steps. Phosphorylation on Thr-244, Thr-248 and Thr-313 by cyclin-dependent kinases promotes interaction with PPP1R8 during mitosis. Post-translationally, citrullinated by PADI4.

It is found in the nucleus. The protein resides in the nucleus speckle. Functionally, component of the 17S U2 SnRNP complex of the spliceosome, a large ribonucleoprotein complex that removes introns from transcribed pre-mRNAs. The 17S U2 SnRNP complex (1) directly participates in early spliceosome assembly and (2) mediates recognition of the intron branch site during pre-mRNA splicing by promoting the selection of the pre-mRNA branch-site adenosine, the nucleophile for the first step of splicing. Within the 17S U2 SnRNP complex, SF3B1 is part of the SF3B subcomplex, which is required for 'A' complex assembly formed by the stable binding of U2 snRNP to the branchpoint sequence in pre-mRNA. Sequence independent binding of SF3A and SF3B subcomplexes upstream of the branch site is essential, it may anchor U2 snRNP to the pre-mRNA. May also be involved in the assembly of the 'E' complex. Also acts as a component of the minor spliceosome, which is involved in the splicing of U12-type introns in pre-mRNAs. Together with other U2 snRNP complex components may also play a role in the selective processing of microRNAs (miRNAs) from the long primary miRNA transcript, pri-miR-17-92. This chain is Splicing factor 3B subunit 1, found in Homo sapiens (Human).